A 244-amino-acid chain; its full sequence is Probable transcriptional regulatory protein DR_2548 (244 aa).

The disordered stretch occupies residues 1 to 23 (MAGHSKWAQIKRKKGANDKKRSA).

The protein belongs to the TACO1 family.

The protein resides in the cytoplasm. In Deinococcus radiodurans (strain ATCC 13939 / DSM 20539 / JCM 16871 / CCUG 27074 / LMG 4051 / NBRC 15346 / NCIMB 9279 / VKM B-1422 / R1), this protein is Probable transcriptional regulatory protein DR_2548.